The chain runs to 311 residues: Pyrimidine-specific ribonucleoside hydrolase RihA (311 aa).

Histidine 240 is an active-site residue.

This sequence belongs to the IUNH family. RihA subfamily.

Functionally, hydrolyzes with equal efficiency cytidine or uridine to ribose and cytosine or uracil, respectively. This is Pyrimidine-specific ribonucleoside hydrolase RihA from Escherichia coli (strain ATCC 8739 / DSM 1576 / NBRC 3972 / NCIMB 8545 / WDCM 00012 / Crooks).